The following is a 340-amino-acid chain: MLDPRARTLLKTLIERYIADGQPVGSRTLSRYSGLELSPATIRNVMSDLEELGLVSSPHTSAGRVPTPRGYRLFVDTMLTVETPIDAEAVARQVQHTLQAGEPQQRVVAAAASVLSNLSQFAGVVLTPRRSHVFKQIEFMRLSDKRILLIIVTPEGDVQNRMLATPRDYSPSQLTEASNYINAHFAGLSFDEVRRRLRDEIDQLRGDMTTLMHAAVTASTEVPDTEDTVLISGERNLLEVADLSSDMARLRKLFDVFDQKTGLLQLLDVSSHAQGVQIFIGGESTLVPIEEMSVVTAPYEVNGQIVGTLGVIGPTRMAYNRVIPIVDITARLLSLTLSQQ.

The protein belongs to the HrcA family.

In terms of biological role, negative regulator of class I heat shock genes (grpE-dnaK-dnaJ and groELS operons). Prevents heat-shock induction of these operons. In Burkholderia ambifaria (strain MC40-6), this protein is Heat-inducible transcription repressor HrcA.